We begin with the raw amino-acid sequence, 125 residues long: Probable 4-amino-4-deoxy-L-arabinose-phosphoundecaprenol flippase subunit ArnF (125 aa).

The Cytoplasmic segment spans residues 1-2 (MG). The chain crosses the membrane as a helical span at residues 3–23 (VMWGLISVAIASLAQLSLGFA). The Periplasmic segment spans residues 24 to 33 (MMRLPSIAHP). A helical transmembrane segment spans residues 34-54 (LAFISGLGAFNAATLALFAGL). Over 55 to 76 (AGYLVSVFCWQKTLHTLALSKA) the chain is Cytoplasmic. A helical transmembrane segment spans residues 77–97 (YALLSLSYVLVWVASMLLPGL). Over 98-100 (QGA) the chain is Periplasmic. The helical transmembrane segment at 101 to 121 (FSLKAMLGVLCIMAGVMLIFL) threads the bilayer. Topologically, residues 122-125 (PARS) are cytoplasmic.

Belongs to the ArnF family. As to quaternary structure, heterodimer of ArnE and ArnF.

The protein resides in the cell inner membrane. It participates in bacterial outer membrane biogenesis; lipopolysaccharide biosynthesis. Functionally, translocates 4-amino-4-deoxy-L-arabinose-phosphoundecaprenol (alpha-L-Ara4N-phosphoundecaprenol) from the cytoplasmic to the periplasmic side of the inner membrane. The polypeptide is Probable 4-amino-4-deoxy-L-arabinose-phosphoundecaprenol flippase subunit ArnF (Salmonella choleraesuis (strain SC-B67)).